The following is a 343-amino-acid chain: Cytoplasmic tRNA 2-thiolation protein 1 (343 aa).

Belongs to the TtcA family. CTU1/NCS6/ATPBD3 subfamily.

The protein resides in the cytoplasm. The protein operates within tRNA modification; 5-methoxycarbonylmethyl-2-thiouridine-tRNA biosynthesis. Functionally, plays a central role in 2-thiolation of mcm(5)S(2)U at tRNA wobble positions of tRNA(Lys), tRNA(Glu) and tRNA(Gln). Directly binds tRNAs and probably acts by catalyzing adenylation of tRNAs, an intermediate required for 2-thiolation. It is unclear whether it acts as a sulfurtransferase that transfers sulfur from thiocarboxylated URM1 onto the uridine of tRNAs at wobble position. The polypeptide is Cytoplasmic tRNA 2-thiolation protein 1 (Drosophila grimshawi (Hawaiian fruit fly)).